A 240-amino-acid polypeptide reads, in one-letter code: Uridylate kinase (240 aa).

12-15 provides a ligand contact to ATP; the sequence is KLSG. Residues 20–25 form an involved in allosteric activation by GTP region; the sequence is GDKGFG. A UMP-binding site is contributed by Gly54. ATP-binding residues include Gly55 and Arg59. UMP is bound by residues Asp74 and 135–142; that span reads TGSPYFST. Residues Asn163, Tyr169, and Asp172 each contribute to the ATP site.

It belongs to the UMP kinase family. Homohexamer.

The protein localises to the cytoplasm. It catalyses the reaction UMP + ATP = UDP + ADP. Its pathway is pyrimidine metabolism; CTP biosynthesis via de novo pathway; UDP from UMP (UMPK route): step 1/1. Allosterically activated by GTP. Inhibited by UTP. In terms of biological role, catalyzes the reversible phosphorylation of UMP to UDP. This Limosilactobacillus reuteri (strain DSM 20016) (Lactobacillus reuteri) protein is Uridylate kinase.